We begin with the raw amino-acid sequence, 169 residues long: Large ribosomal subunit protein uL10 (169 aa).

It belongs to the universal ribosomal protein uL10 family. Part of the ribosomal stalk of the 50S ribosomal subunit. The N-terminus interacts with L11 and the large rRNA to form the base of the stalk. The C-terminus forms an elongated spine to which L12 dimers bind in a sequential fashion forming a multimeric L10(L12)X complex.

Its function is as follows. Forms part of the ribosomal stalk, playing a central role in the interaction of the ribosome with GTP-bound translation factors. The polypeptide is Large ribosomal subunit protein uL10 (Onion yellows phytoplasma (strain OY-M)).